The following is a 272-amino-acid chain: Dermonecrotic toxin LvSicTox-alphaIC1aiii (272 aa).

Residue His4 is part of the active site. Mg(2+) contacts are provided by Glu24 and Asp26. His40 acts as the Nucleophile in catalysis. 2 disulfides stabilise this stretch: Cys44–Cys50 and Cys46–Cys189. Asp84 is a Mg(2+) binding site.

It belongs to the arthropod phospholipase D family. Class II subfamily. It depends on Mg(2+) as a cofactor. In terms of tissue distribution, expressed by the venom gland.

The protein resides in the secreted. The enzyme catalyses an N-(acyl)-sphingosylphosphocholine = an N-(acyl)-sphingosyl-1,3-cyclic phosphate + choline. It carries out the reaction an N-(acyl)-sphingosylphosphoethanolamine = an N-(acyl)-sphingosyl-1,3-cyclic phosphate + ethanolamine. The catalysed reaction is a 1-acyl-sn-glycero-3-phosphocholine = a 1-acyl-sn-glycero-2,3-cyclic phosphate + choline. It catalyses the reaction a 1-acyl-sn-glycero-3-phosphoethanolamine = a 1-acyl-sn-glycero-2,3-cyclic phosphate + ethanolamine. Dermonecrotic toxins cleave the phosphodiester linkage between the phosphate and headgroup of certain phospholipids (sphingolipid and lysolipid substrates), forming an alcohol (often choline) and a cyclic phosphate. This toxin acts on sphingomyelin (SM). It may also act on ceramide phosphoethanolamine (CPE), lysophosphatidylcholine (LPC) and lysophosphatidylethanolamine (LPE), but not on lysophosphatidylserine (LPS), and lysophosphatidylglycerol (LPG). It acts by transphosphatidylation, releasing exclusively cyclic phosphate products as second products. Induces dermonecrosis, hemolysis, increased vascular permeability, edema, inflammatory response, and platelet aggregation. The sequence is that of Dermonecrotic toxin LvSicTox-alphaIC1aiii from Loxosceles variegata (Recluse spider).